The sequence spans 269 residues: Putative hydro-lyase Atu3911 (269 aa).

This sequence belongs to the D-glutamate cyclase family.

This is Putative hydro-lyase Atu3911 from Agrobacterium fabrum (strain C58 / ATCC 33970) (Agrobacterium tumefaciens (strain C58)).